Here is a 281-residue protein sequence, read N- to C-terminus: Transcription factor bHLH79 (281 aa).

The segment at 47–167 is disordered; it reads FTRSEHSGNK…GQATDRHSLA (121 aa). Composition is skewed to basic and acidic residues over residues 77-88 and 138-152; these read KTRDLNSEDDSS and TEQKNKPEPPKDYIH. The bHLH domain occupies 159–209; sequence QATDRHSLAERARREKISEKMTALQDIIPGCNKIIGKALVLDEIINYIQSL.

In terms of assembly, homodimer.

It localises to the nucleus. The protein is Transcription factor bHLH79 (BHLH79) of Arabidopsis thaliana (Mouse-ear cress).